A 328-amino-acid polypeptide reads, in one-letter code: Trans-O-hydroxybenzylidenepyruvate hydratase-aldolase (328 aa).

Belongs to the DapA family. Homotrimer.

The catalysed reaction is (3E)-4-(2-hydroxyphenyl)-2-oxobut-3-enoate + H2O = salicylaldehyde + pyruvate. The protein operates within aromatic compound metabolism; naphthalene degradation. With respect to regulation, inhibited bye p-chloromercuribenzoate and salicylaldehyde. Activated by salicylate. Functionally, involved in the naphthalene and naphthalenesulfonate catabolic pathway. Catalyzes the transformation of trans-O-hydroxybenzylidenepyruvate (THBPA) to salicylaldehyde and pyruvate. The reaction is reversible. Can also use 2,4-dihydroxybenzalpyruvate (2,4-DHBP) and 2,6-dihydroxybenzalpyruvate (2,6-DHBP). The sequence is that of Trans-O-hydroxybenzylidenepyruvate hydratase-aldolase (nsaE) from Sphingobium xenophagum.